The primary structure comprises 230 residues: Eukaryotic translation initiation factor 4E-1 (230 aa).

The disordered stretch occupies residues 1-53 (MVVEDSQKSTITDEQNPSRVDNDDDDLEDGEILEDADDAASAASKPPSAFLRN). Positions 8–19 (KSTITDEQNPSR) are enriched in polar residues. Over residues 22 to 38 (NDDDDLEDGEILEDADD) the composition is skewed to acidic residues. Low complexity predominate over residues 39–49 (AASAASKPPSA). 2 EIF4G-binding regions span residues 55–58 (HPLE) and 65–101 (FDNP…NNIH). MRNA-binding positions include 73 to 78 (KQAAWG), lysine 105, and 123 to 124 (WE). The cysteines at positions 128 and 166 are disulfide-linked. Positions 149–158 (YTLLAMIGEQ) are EIF4G-binding. MRNA-binding positions include 173–178 (RNRQDK) and 218–222 (KKHER).

Belongs to the eukaryotic initiation factor 4E family. As to quaternary structure, EIF4F is a multi-subunit complex, the composition of which varies with external and internal environmental conditions. It is composed of at least EIF4A, EIF4E and EIF4G. EIF4E is also known to interact with other partners. In higher plants two isoforms of EIF4F have been identified, named isoform EIF4F and isoform EIF(iso)4F. Isoform EIF4F has subunits p220 and p26, whereas isoform EIF(iso)4F has subunits p82 and p28. In terms of assembly, (Microbial infection) Interacts with potyvirus viral genome-linked protein (VPg); this interaction is possible in susceptible hosts but impaired in resistant plants. In terms of processing, according to the redox status, the Cys-128-Cys-166 disulfide bridge may have a role in regulating protein function by affecting its ability to bind capped mRNA.

The protein resides in the nucleus. Its subcellular location is the cytoplasm. Its function is as follows. Component of the protein complex eIF4F, which is involved in the recognition of the mRNA cap, ATP-dependent unwinding of 5'-terminal secondary structure and recruitment of mRNA to the ribosome. Recognizes and binds the 7-methylguanosine-containing mRNA cap during an early step in the initiation of protein synthesis and facilitates ribosome binding by inducing the unwinding of the mRNAs secondary structures. Key component of recessive resistance to potyviruses. In terms of biological role, (Microbial infection) Susceptibility host factor required for viral infection by recruiting viral RNAs to the host ribosomal complex via an interaction with viral genome-linked protein (VPg). In Phaseolus vulgaris (Kidney bean), this protein is Eukaryotic translation initiation factor 4E-1.